We begin with the raw amino-acid sequence, 35 residues long: MSDIN-like toxin proprotein 6 (35 aa).

Positions 1 to 10 (MSDINGTRLP) are excised as a propeptide. The segment at residues 11–20 (IPGLIPLGIP) is a cross-link (cyclopeptide (Ile-Pro)). Positions 21-35 (CVSDDVNPTLTRGER) are excised as a propeptide.

It belongs to the MSDIN fungal toxin family. Post-translationally, processed by the macrocyclase-peptidase enzyme POPB to yield a toxic cyclic decapeptide. POPB first removes 10 residues from the N-terminus. Conformational trapping of the remaining peptide forces the enzyme to release this intermediate rather than proceed to macrocyclization. The enzyme rebinds the remaining peptide in a different conformation and catalyzes macrocyclization of the N-terminal 10 residues.

Its function is as follows. Probable toxin that belongs to the MSDIN-like toxin family responsible for a large number of food poisoning cases and deaths. The protein is MSDIN-like toxin proprotein 6 of Amanita bisporigera (Destroying angel).